The sequence spans 647 residues: Pumilio homolog 3 (647 aa).

Over residues 1 to 10 the composition is skewed to basic residues; that stretch reads MEVKGKKKIT. Residues 1–123 are disordered; that stretch reads MEVKGKKKIT…KKKKELKQNR (123 aa). Lys-33 is modified (N6-acetyllysine). A compositionally biased stretch (basic residues) spans 59–68; sequence PGKKRVKQFK. Residues 93 to 123 show a composition bias toward basic and acidic residues; sequence FQPDGKSDESAAKKPKWDDFKKKKKELKQNR. The short motif at 105 to 117 is the Nuclear localization signal element; that stretch reads KKPKWDDFKKKKK. Residues 142–509 form the PUM-HD domain; that stretch reads ESLRRKDCDK…VVLDKSVCVL (368 aa). 11 Pumilio repeats span residues 176 to 211, 212 to 247, 248 to 276, 288 to 324, 325 to 360, 361 to 396, 397 to 434, 435 to 503, 504 to 550, 551 to 595, and 596 to 635; these read HDST…LSKA, KYSR…MLRH, SEAS…ELYG, PTLE…VIKH, SLVH…LAHT, HDGA…IANG, QYSH…IVND, KYGR…VVLD, KSVC…IAEH, PAGH…WASI, and NRGA…KSTS.

In terms of assembly, interacts with PARP1 (via catalytic domain).

It is found in the nucleus. The protein localises to the nucleolus. It localises to the nucleoplasm. The protein resides in the chromosome. In terms of biological role, inhibits the poly(ADP-ribosyl)ation activity of PARP1 and the degradation of PARP1 by CASP3 following genotoxic stress. Binds to double-stranded RNA or DNA without sequence specificity. Involved in development of the eye and of primordial germ cells. This Rattus norvegicus (Rat) protein is Pumilio homolog 3.